Here is a 348-residue protein sequence, read N- to C-terminus: GTP 3',8-cyclase (348 aa).

Positions 24-242 (PFGRAVTYLR…EKQFTLTDID (219 aa)) constitute a Radical SAM core domain. Arg-33 is a binding site for GTP. Positions 40 and 44 each coordinate [4Fe-4S] cluster. Tyr-46 lines the S-adenosyl-L-methionine pocket. [4Fe-4S] cluster is bound at residue Cys-47. Arg-82 serves as a coordination point for GTP. Gly-86 is a binding site for S-adenosyl-L-methionine. Thr-115 provides a ligand contact to GTP. Position 139 (Ser-139) interacts with S-adenosyl-L-methionine. GTP is bound at residue Lys-175. Position 209 (Met-209) interacts with S-adenosyl-L-methionine. Residues Cys-272 and Cys-275 each coordinate [4Fe-4S] cluster. A GTP-binding site is contributed by 277-279 (RVR). Residue Cys-289 participates in [4Fe-4S] cluster binding.

The protein belongs to the radical SAM superfamily. MoaA family. Monomer and homodimer. It depends on [4Fe-4S] cluster as a cofactor.

It carries out the reaction GTP + AH2 + S-adenosyl-L-methionine = (8S)-3',8-cyclo-7,8-dihydroguanosine 5'-triphosphate + 5'-deoxyadenosine + L-methionine + A + H(+). Its pathway is cofactor biosynthesis; molybdopterin biosynthesis. Catalyzes the cyclization of GTP to (8S)-3',8-cyclo-7,8-dihydroguanosine 5'-triphosphate. The polypeptide is GTP 3',8-cyclase (Rhizobium leguminosarum bv. trifolii (strain WSM2304)).